A 116-amino-acid chain; its full sequence is Protein Rev (116 aa).

Residues S5 and S8 each carry the phosphoserine; by host CK2 modification. The segment at 18–26 is homomultimerization; that stretch reads LIKFLYQSN. Residues 23–48 form a disordered region; that stretch reads YQSNPPPSPEGTRQARRNRRRRWRAR. The Nuclear localization signal and RNA-binding (RRE) signature appears at 34–50; that stretch reads TRQARRNRRRRWRARQR. The segment covering 36–48 has biased composition (basic residues); it reads QARRNRRRRWRAR. The Nuclear export signal and binding to XPO1 signature appears at 73–84; it reads LQLPPLERLNLN. Residues 90-116 form a disordered region; sequence GTSGTQGVGSPQIPVEPPAVLESGTEE. 2 positions are modified to phosphoserine; by host: S92 and S99.

This sequence belongs to the HIV-1 REV protein family. In terms of assembly, homomultimer; when bound to the RRE. Multimeric assembly is essential for activity and may involve XPO1. Binds to human KPNB1, XPO1, TNPO1, RANBP5 and IPO7. Interacts with the viral Integrase. Interacts with human KHDRBS1. Interacts with human NAP1; this interaction decreases Rev multimerization and stimulates its activity. Interacts with human DEAD-box helicases DDX3 and DDX24; these interactions may serve for viral RNA export to the cytoplasm and packaging, respectively. Interacts with human PSIP1; this interaction may inhibit HIV-1 DNA integration by promoting dissociation of the Integrase-LEDGF/p75 complex. In terms of processing, asymmetrically arginine dimethylated at one site by host PRMT6. Methylation impairs the RNA-binding activity and export of viral RNA from the nucleus to the cytoplasm. Phosphorylated by protein kinase CK2. Presence of, and maybe binding to the N-terminus of the regulatory beta subunit of CK2 is necessary for CK2-mediated Rev's phosphorylation.

The protein localises to the host nucleus. Its subcellular location is the host nucleolus. The protein resides in the host cytoplasm. In terms of biological role, escorts unspliced or incompletely spliced viral pre-mRNAs (late transcripts) out of the nucleus of infected cells. These pre-mRNAs carry a recognition sequence called Rev responsive element (RRE) located in the env gene, that is not present in fully spliced viral mRNAs (early transcripts). This function is essential since most viral proteins are translated from unspliced or partially spliced pre-mRNAs which cannot exit the nucleus by the pathway used by fully processed cellular mRNAs. Rev itself is translated from a fully spliced mRNA that readily exits the nucleus. Rev's nuclear localization signal (NLS) binds directly to KPNB1/Importin beta-1 without previous binding to KPNA1/Importin alpha-1. KPNB1 binds to the GDP bound form of RAN (Ran-GDP) and targets Rev to the nucleus. In the nucleus, the conversion from Ran-GDP to Ran-GTP dissociates Rev from KPNB1 and allows Rev's binding to the RRE in viral pre-mRNAs. Rev multimerization on the RRE via cooperative assembly exposes its nuclear export signal (NES) to the surface. Rev can then form a complex with XPO1/CRM1 and Ran-GTP, leading to nuclear export of the complex. Conversion from Ran-GTP to Ran-GDP mediates dissociation of the Rev/RRE/XPO1/RAN complex, so that Rev can return to the nucleus for a subsequent round of export. Beside KPNB1, also seems to interact with TNPO1/Transportin-1, RANBP5/IPO5 and IPO7/RANBP7 for nuclear import. The nucleoporin-like HRB/RIP is an essential cofactor that probably indirectly interacts with Rev to release HIV RNAs from the perinuclear region to the cytoplasm. The sequence is that of Protein Rev from Homo sapiens (Human).